The primary structure comprises 616 residues: Chaperone protein HscA (616 aa).

This sequence belongs to the heat shock protein 70 family.

In terms of biological role, chaperone involved in the maturation of iron-sulfur cluster-containing proteins. Has a low intrinsic ATPase activity which is markedly stimulated by HscB. Involved in the maturation of IscU. The chain is Chaperone protein HscA from Salmonella paratyphi A (strain ATCC 9150 / SARB42).